A 583-amino-acid polypeptide reads, in one-letter code: Protein NRT1/ PTR FAMILY 5.1 (583 aa).

Residues 74-94 form a helical membrane-spanning segment; it reads WSGAVWITPIAGAYIADSYIG. At T98 the chain carries Phosphothreonine. Transmembrane regions (helical) follow at residues 99-119, 134-154, 182-202, 210-230, 320-340, 361-381, 405-425, 446-466, 485-505, and 529-549; these read FTAS…AVTV, ASSL…IGAG, FFNW…LGLV, WGLG…VFYI, VLGL…WAQV, IPAA…VPMY, LGVG…VEVK, IFWL…NAIG, TFFT…VTMI, and YYYG…VWAA.

This sequence belongs to the major facilitator superfamily. Proton-dependent oligopeptide transporter (POT/PTR) (TC 2.A.17) family. Expressed in flowers. Detected in stems, leaves and siliques.

It localises to the membrane. This chain is Protein NRT1/ PTR FAMILY 5.1 (NPF5.1), found in Arabidopsis thaliana (Mouse-ear cress).